Here is an 867-residue protein sequence, read N- to C-terminus: Cilium assembly protein DZIP1 (867 aa).

Positions 12 to 203 (MPFQKHVYYP…KANYYQCHFC (192 aa)) are mediates interaction with PCM1. The tract at residues 12-367 (MPFQKHVYYP…QDFHNVMQLL (356 aa)) is mediates interaction with GLI3 and localization to the cilium basal body. The interval 154–278 (CDGEQSKKLL…SKEYEMQKTK (125 aa)) is required for interaction with DAZ1. The C2H2-type zinc finger occupies 198–221 (YQCHFCDKAFMNQAFLQSHIQRRH). Position 226 is a phosphoserine; by PLK1 (Ser-226). Coiled coils occupy residues 230–340 (YQKN…KSNI), 401–445 (TSMI…FTCN), and 568–588 (DQLH…EREI). Positions 446 to 617 (PLNSISEPKG…EKALLSSDQC (172 aa)) are mediates interaction with GDI2 and RAB8A. 3 stretches are compositionally biased toward polar residues: residues 643–654 (LIRQKAVSTDRT), 671–680 (KSSTITTPPF), and 708–718 (NKGSFGKNTVK). Disordered stretches follow at residues 643 to 768 (LIRQ…GGTN) and 796 to 867 (SLEE…TSDV). Residues 722–733 (DGTEGSEIEDTD) show a composition bias toward acidic residues. The segment covering 807–823 (SGKEQKEPPPAKNEPHF) has biased composition (basic and acidic residues). Residues 848 to 859 (SSTLKSSLVTVT) are compositionally biased toward low complexity.

It belongs to the DZIP C2H2-type zinc-finger protein family. In terms of assembly, interacts with DAZ1. Interacts with the BBSome; recruits the BBSome to centriolar satellites of the cilium. Interacts with PCM1; localizes DZIP1 and the associated BBSome to centriolar satellites. Interacts with RAB8A (GDP-bound inactive form); recruits RAB8A to the basal body of the cilium and prevents its inhibition by GDI2. Interacts with GDI2; negatively regulates the interaction of GDI2 with GDP-bound RAB8A. Interacts with GLI3; retains GLI3 within the cytoplasm. Interacts with CEP164. Interacts with IFT88. Post-translationally, phosphorylation at Ser-226 by PLK1 before mitosis prevents interaction with PCM1 and localization to centriolar satellites. Thereby, it negatively regulates the localization of the BBSome to centriolar satellites. Predominantly expressed in testis (at protein level). Also expressed in fetal brain, adult oocytes and ovary. Expressed in undifferentiated ES cells. In testis, it is specifically expressed in germ cells (at protein level). Expressed in mature germ cells and secondary spermatocytes, while it is weakly or not expressed in primary spermatocytes.

It localises to the cytoplasm. The protein resides in the cytoskeleton. It is found in the cilium basal body. Its subcellular location is the microtubule organizing center. The protein localises to the centrosome. It localises to the centriolar satellite. The protein resides in the centriole. It is found in the nucleus. Its subcellular location is the nucleus speckle. Functionally, molecular adapter that recruits protein complexes required for cilium assembly and function to the cilium basal body. At the exit of mitosis, localizes to the basal body and ciliary base of the forming primary cilium where it recruits and activates RAB8A to direct vesicle-mediated transport of proteins to the cilium. Also recruits the BBSome, a complex involved in cilium biogenesis, by bridging it to PCM1 at the centriolar satellites of the cilium. It is also required for the recruitment to the cilium basal body of the intraflagellar transport (IFT) machinery as well as the ciliary appendage proteins CEP164 and NINEIN. Functions as a regulator of Hedgehog signaling both through its role in cilium assembly but also probably through its ability to retain GLI3 within the cytoplasm. It is involved in spermatogenesis through its role in organization of the basal body and assembly of the sperm flagellum. Also indirectly involved in heart development through its function in ciliogenesis. This Homo sapiens (Human) protein is Cilium assembly protein DZIP1.